Consider the following 333-residue polypeptide: Protein FanF (333 aa).

An N-terminal signal peptide occupies residues 1–22 (MKNKYNLLFFLFLLCYGDVALA).

Three disulfide bonds are present.

It localises to the fimbrium. Minor component of K99 fimbriae. Is not required for binding of K99 fimbriae to the ganglioside receptor. May play a role in initiation, elongation and flexibility of the fimbriae. The protein is Protein FanF (fanF) of Escherichia coli.